The sequence spans 160 residues: NADH-quinone oxidoreductase subunit I (160 aa).

2 4Fe-4S ferredoxin-type domains span residues 51–81 and 91–120; these read LRRYDDGEERCIACKLCEAICPAQAITIEAA and VRYDIDMTKCIYCGFCQEACPVDAIVEGPN. [4Fe-4S] cluster-binding residues include Cys61, Cys64, Cys67, Cys71, Cys100, Cys103, Cys106, and Cys110.

The protein belongs to the complex I 23 kDa subunit family. In terms of assembly, NDH-1 is composed of 14 different subunits. Subunits NuoA, H, J, K, L, M, N constitute the membrane sector of the complex. It depends on [4Fe-4S] cluster as a cofactor.

It is found in the cell inner membrane. The catalysed reaction is a quinone + NADH + 5 H(+)(in) = a quinol + NAD(+) + 4 H(+)(out). Functionally, NDH-1 shuttles electrons from NADH, via FMN and iron-sulfur (Fe-S) centers, to quinones in the respiratory chain. The immediate electron acceptor for the enzyme in this species is believed to be ubiquinone. Couples the redox reaction to proton translocation (for every two electrons transferred, four hydrogen ions are translocated across the cytoplasmic membrane), and thus conserves the redox energy in a proton gradient. This chain is NADH-quinone oxidoreductase subunit I, found in Anaplasma marginale (strain St. Maries).